The primary structure comprises 671 residues: DNA ligase (671 aa).

NAD(+)-binding positions include 32–36, 81–82, and E114; these read DVEYD and SL. Residue K116 is the N6-AMP-lysine intermediate of the active site. Residues R137, E175, K292, and K316 each coordinate NAD(+). Positions 410, 413, 428, and 434 each coordinate Zn(2+). One can recognise a BRCT domain in the interval 592–671; sequence EKNNYFSGKN…AEFYQILGIR (80 aa).

The protein belongs to the NAD-dependent DNA ligase family. LigA subfamily. Mg(2+) serves as cofactor. It depends on Mn(2+) as a cofactor.

It catalyses the reaction NAD(+) + (deoxyribonucleotide)n-3'-hydroxyl + 5'-phospho-(deoxyribonucleotide)m = (deoxyribonucleotide)n+m + AMP + beta-nicotinamide D-nucleotide.. Its function is as follows. DNA ligase that catalyzes the formation of phosphodiester linkages between 5'-phosphoryl and 3'-hydroxyl groups in double-stranded DNA using NAD as a coenzyme and as the energy source for the reaction. It is essential for DNA replication and repair of damaged DNA. The chain is DNA ligase from Baumannia cicadellinicola subsp. Homalodisca coagulata.